A 347-amino-acid chain; its full sequence is 4-hydroxy-2-oxovalerate aldolase 1 (347 aa).

In terms of domain architecture, Pyruvate carboxyltransferase spans 13–265 (IRVTDTSLRD…KTGIDFFAIA (253 aa)). 21–22 (RD) provides a ligand contact to substrate. Asp22 contacts Mn(2+). His25 serves as the catalytic Proton acceptor. The substrate site is built by Ser175 and His204. Mn(2+) is bound by residues His204 and His206. Tyr295 lines the substrate pocket.

Belongs to the 4-hydroxy-2-oxovalerate aldolase family.

It carries out the reaction (S)-4-hydroxy-2-oxopentanoate = acetaldehyde + pyruvate. The chain is 4-hydroxy-2-oxovalerate aldolase 1 from Rhodococcus erythropolis (strain PR4 / NBRC 100887).